We begin with the raw amino-acid sequence, 396 residues long: Ornithine aminotransferase (396 aa).

Position 255 is an N6-(pyridoxal phosphate)lysine (Lys255).

It belongs to the class-III pyridoxal-phosphate-dependent aminotransferase family. OAT subfamily. The cofactor is pyridoxal 5'-phosphate.

It localises to the cytoplasm. It carries out the reaction a 2-oxocarboxylate + L-ornithine = L-glutamate 5-semialdehyde + an L-alpha-amino acid. It participates in amino-acid biosynthesis; L-proline biosynthesis; L-glutamate 5-semialdehyde from L-ornithine: step 1/1. Catalyzes the interconversion of ornithine to glutamate semialdehyde. The polypeptide is Ornithine aminotransferase (Staphylococcus epidermidis (strain ATCC 12228 / FDA PCI 1200)).